The following is a 567-amino-acid chain: Septation ring formation regulator EzrA (567 aa).

The Extracellular portion of the chain corresponds to 1 to 2; sequence ME. The helical transmembrane segment at 3–21 threads the bilayer; the sequence is IAVIVLLLLGGVMIYNHVY. Topologically, residues 22-567 are cytoplasmic; that stretch reads RKKMYSEIDR…IFRDERSKEE (546 aa). Coiled-coil stretches lie at residues 97 to 188 and 254 to 465; these read RYAK…LTAS and REIV…LEEK.

It belongs to the EzrA family.

It is found in the cell membrane. Functionally, negative regulator of FtsZ ring formation; modulates the frequency and position of FtsZ ring formation. Inhibits FtsZ ring formation at polar sites. Interacts either with FtsZ or with one of its binding partners to promote depolymerization. This chain is Septation ring formation regulator EzrA, found in Geobacillus sp. (strain WCH70).